The primary structure comprises 201 residues: Small ribosomal subunit protein uS4c (201 aa).

Positions 15 to 43 (LGALPGLTNKRPRAGSDLRNQSRSGKRSQ) are disordered. An S4 RNA-binding domain is found at 89–149 (MRLDNILFRL…DEQKSIALIQ (61 aa)).

In terms of assembly, component of the chloroplast small ribosomal subunit (SSU). Mature 70S chloroplast ribosomes of higher plants consist of a small (30S) and a large (50S) subunit. The 30S small subunit contains 1 molecule of ribosomal RNA (16S rRNA) and 24 different proteins. The 50S large subunit contains 3 rRNA molecules (23S, 5S and 4.5S rRNA) and 33 different proteins.

The protein resides in the plastid. Its subcellular location is the chloroplast. Its function is as follows. Component of the chloroplast ribosome (chloro-ribosome), a dedicated translation machinery responsible for the synthesis of chloroplast genome-encoded proteins, including proteins of the transcription and translation machinery and components of the photosynthetic apparatus. This is Small ribosomal subunit protein uS4c (rps4) from Spinacia oleracea (Spinach).